Reading from the N-terminus, the 126-residue chain is Aspartate 1-decarboxylase (126 aa).

Serine 25 serves as the catalytic Schiff-base intermediate with substrate; via pyruvic acid. Residue serine 25 is modified to Pyruvic acid (Ser). Threonine 57 provides a ligand contact to substrate. The active-site Proton donor is tyrosine 58. 73–75 (GAA) is a substrate binding site.

This sequence belongs to the PanD family. In terms of assembly, heterooctamer of four alpha and four beta subunits. Pyruvate serves as cofactor. Is synthesized initially as an inactive proenzyme, which is activated by self-cleavage at a specific serine bond to produce a beta-subunit with a hydroxyl group at its C-terminus and an alpha-subunit with a pyruvoyl group at its N-terminus.

The protein resides in the cytoplasm. The enzyme catalyses L-aspartate + H(+) = beta-alanine + CO2. The protein operates within cofactor biosynthesis; (R)-pantothenate biosynthesis; beta-alanine from L-aspartate: step 1/1. Its function is as follows. Catalyzes the pyruvoyl-dependent decarboxylation of aspartate to produce beta-alanine. The protein is Aspartate 1-decarboxylase of Tolumonas auensis (strain DSM 9187 / NBRC 110442 / TA 4).